The following is a 306-amino-acid chain: Homoserine kinase (306 aa).

Position 95–105 (95–105) interacts with ATP; sequence PQSRGLGSSAA.

This sequence belongs to the GHMP kinase family. Homoserine kinase subfamily.

It is found in the cytoplasm. It catalyses the reaction L-homoserine + ATP = O-phospho-L-homoserine + ADP + H(+). It participates in amino-acid biosynthesis; L-threonine biosynthesis; L-threonine from L-aspartate: step 4/5. In terms of biological role, catalyzes the ATP-dependent phosphorylation of L-homoserine to L-homoserine phosphate. The sequence is that of Homoserine kinase from Corynebacterium urealyticum (strain ATCC 43042 / DSM 7109).